Reading from the N-terminus, the 671-residue chain is Phenol 2-monooxygenase (671 aa).

Residues 10 to 43 (DVLI…RIFD) and 295 to 305 (LQEGRVFLAGD) contribute to the FAD site.

It belongs to the PheA/TfdB FAD monooxygenase family. FAD serves as cofactor.

It is found in the cytoplasm. The enzyme catalyses phenol + NADPH + O2 + H(+) = catechol + NADP(+) + H2O. The protein operates within aromatic compound metabolism; phenol degradation. In terms of biological role, hydroxylates phenol to catechol. Also acts on cresols. The sequence is that of Phenol 2-monooxygenase (tbuD) from Ralstonia pickettii (Burkholderia pickettii).